A 495-amino-acid chain; its full sequence is Cysteine-rich secretory protein LCCL domain-containing 2 (495 aa).

The N-terminal stretch at 1 to 22 is a signal peptide; sequence MSCLLNNMVLMGLALLVCGVQA. N27 carries an N-linked (GlcNAc...) asparagine glycan. Positions 60–200 constitute an SCP domain; that stretch reads LMLHNKLRGQ…ENAVYLVCNY (141 aa). LCCL domains are found at residues 282 to 377 and 383 to 486; these read MTQV…SSSF and TETA…QNGN. Disulfide bonds link C288/C306, C310/C330, C389/C411, and C415/C438.

Binds to heparin, dermatan sulfate and chondroitin sulfate. In terms of tissue distribution, present in kidney renal tubules (at protein level).

It localises to the secreted. In terms of biological role, promotes matrix assembly. This Mus musculus (Mouse) protein is Cysteine-rich secretory protein LCCL domain-containing 2 (Crispld2).